Here is a 158-residue protein sequence, read N- to C-terminus: AAAMKNVTELNEPLSNEERNLLSVAYKNVVGARRSSWRVISSIEQKTSFYLKMKGDYYRYLAEVATGEKRATVVESSEKAYSEAHEISKEHMQPTHPIRLGLALNYSVFYYEITAFDDAIAELDTLNEDSYKDSTLIMQLLRDNLTLWTSDQQDDDGG.

The interval 1-158 is interaction with SPATA18/MIEAP; the sequence is AAAMKNVTEL…TSDQQDDDGG (158 aa). A Phosphoserine modification is found at Ser-48. Tyr-60 carries the post-translational modification Phosphotyrosine. Thr-72 bears the Phosphothreonine mark. The residue at position 130 (Ser-130) is a Phosphoserine. Residue Thr-149 is modified to Phosphothreonine. Ser-150 carries the post-translational modification Phosphoserine.

The protein belongs to the 14-3-3 family. As to quaternary structure, homodimer. Part of a complex that contains DSG3, PKP1, YAP1 and YWHAG; the complex is required for localization of DSG3 and YAP1 to the cell membrane in keratinocytes. Interacts with SAMSN1. Interacts with RAF1, SSH1 and CRTC2/TORC2. Interacts with ABL1 (phosphorylated form); the interaction retains it in the cytoplasm. Interacts with GAB2. Interacts with MDM4 (phosphorylated); negatively regulates MDM4 activity toward TP53. Interacts with PKA-phosphorylated AANAT and SIRT2. Interacts with the 'Thr-369' phosphorylated form of DAPK2. Interacts with PI4KB, TBC1D22A and TBC1D22B. Interacts with SLITRK1. Interacts with LRRK2; this interaction is dependent on LRRK2 phosphorylation. Interacts with MARK2 and MARK3. Interacts with MEFV. Interacts with ENDOG, TSC2 and PIK3C3; interaction with ENDOG weakens its interaction with TSC2 and PIK3C3. Interacts with (phosphorylated) WDR24. Interacts with BEST1; this interaction promotes L-glutamate channel activity leading to the positive regulation of NMDA glutamate receptor activity through the L-glutamate secretion. Interacts with PKP1 (when phosphorylated); the interaction results in translocation of PKP1 to the cytoplasm and loss of intercellular adhesion in keratinocytes. Interacts with SPATA18/MIEAP; a protein that also plays a role in MALM. Phosphorylated by various PKC isozymes.

Its subcellular location is the cytoplasm. It localises to the cytosol. The protein localises to the mitochondrion matrix. In terms of biological role, adapter protein implicated in the regulation of a large spectrum of both general and specialized signaling pathways. Binds to a large number of partners, usually by recognition of a phosphoserine or phosphothreonine motif. Binding generally results in the modulation of the activity of the binding partner. Promotes inactivation of WDR24 component of the GATOR2 complex by binding to phosphorylated WDR24. Participates in the positive regulation of NMDA glutamate receptor activity by promoting the L-glutamate secretion through interaction with BEST1. Reduces keratinocyte intercellular adhesion, via interacting with PKP1 and sequestering it in the cytoplasm, thereby reducing its incorporation into desmosomes. Plays a role in mitochondrial protein catabolic process (also named MALM) that promotes the degradation of damaged proteins inside mitochondria. The chain is 14-3-3 protein gamma from Ovis aries (Sheep).